The primary structure comprises 297 residues: 33 kDa chaperonin (297 aa).

2 disulfides stabilise this stretch: cysteine 239–cysteine 241 and cysteine 272–cysteine 275.

This sequence belongs to the HSP33 family. In terms of processing, under oxidizing conditions two disulfide bonds are formed involving the reactive cysteines. Under reducing conditions zinc is bound to the reactive cysteines and the protein is inactive.

It localises to the cytoplasm. In terms of biological role, redox regulated molecular chaperone. Protects both thermally unfolding and oxidatively damaged proteins from irreversible aggregation. Plays an important role in the bacterial defense system toward oxidative stress. The sequence is that of 33 kDa chaperonin from Clostridium acetobutylicum (strain ATCC 824 / DSM 792 / JCM 1419 / IAM 19013 / LMG 5710 / NBRC 13948 / NRRL B-527 / VKM B-1787 / 2291 / W).